We begin with the raw amino-acid sequence, 123 residues long: KQFTKCQLSQVLKSMDGYKGVTLPEWICTIFHNSGYDTQTIVKNNGKTEYGLFEINNKMWCRDNQILPSRNICGISCNKFLDDDLTDDVMCAKKDLDSEGIDYWLAHKPLCSEKLEQWLCEEL.

One can recognise a C-type lysozyme domain in the interval 1 to 123; sequence KQFTKCQLSQ…KLEQWLCEEL (123 aa). 4 disulfide bridges follow: C6–C120, C28–C111, C61–C77, and C73–C91. Residues K79, D82, D84, D87, and D88 each contribute to the Ca(2+) site.

This sequence belongs to the glycosyl hydrolase 22 family. In terms of assembly, lactose synthase (LS) is a heterodimer of a catalytic component, beta1,4-galactosyltransferase (beta4Gal-T1) and a regulatory component, alpha-lactalbumin (LA). Mammary gland specific. Secreted in milk.

The protein localises to the secreted. Functionally, regulatory subunit of lactose synthase, changes the substrate specificity of galactosyltransferase in the mammary gland making glucose a good acceptor substrate for this enzyme. This enables LS to synthesize lactose, the major carbohydrate component of milk. In other tissues, galactosyltransferase transfers galactose onto the N-acetylglucosamine of the oligosaccharide chains in glycoproteins. The sequence is that of Alpha-lactalbumin B/C from Equus caballus (Horse).